The sequence spans 85 residues: uncharacterized protein (85 aa).

This is an uncharacterized protein from Acidianus filamentous virus 2 (isolate Italy/Pozzuoli) (AFV-2).